A 403-amino-acid polypeptide reads, in one-letter code: MLRNLVVRNACRNRPSIQVARGLCRHQTRRLMASSPQFGRNSNQEKTAGFIMGILSMAGALYFIAPNRKPLFASRKVESDKTAEEELSSGGEQSPENEDDNNSKSDENGDDNDSKNDETEAGPQLGGDKIGASKVAEDGELVVLAEEDNKSSEDKDTDESKVSTKDDEQSNEDNATANNQKDENISSENSEENTSDKTLDNNAGSSEKKDPEHSDDEKSQQGQSDDKTTTEDNNGEEESSKKTVSDSENSAKQSESSDEEKEELRKQEEKQMGPTEEEVQHEGAYNPDTGEINWDCPCLGGMAHGPCGEEFKSAFSCFVYSEAEPKGIDCVEKFQHMQDCFRKYPEHYAEQLKETSDDEEPQDKVKVNTIESAPNVSSAKENAAKKAEQSDVKKEPLNEESKP.

The transit peptide at 1 to 31 directs the protein to the mitochondrion; sequence MLRNLVVRNACRNRPSIQVARGLCRHQTRRL. The Mitochondrial matrix portion of the chain corresponds to 33-46; the sequence is ASSPQFGRNSNQEK. The helical; Signal-anchor for type II membrane protein transmembrane segment at 47–66 threads the bilayer; that stretch reads TAGFIMGILSMAGALYFIAP. The Mitochondrial intermembrane segment spans residues 67–403; the sequence is NRKPLFASRK…KEPLNEESKP (337 aa). Basic and acidic residues-rich tracts occupy residues 75-84, 101-118, 147-168, 206-230, and 262-271; these read RKVESDKTAE, NNSKSDENGDDNDSKNDE, EDNKSSEDKDTDESKVSTKDDE, SEKKDPEHSDDEKSQQGQSDDKTTT, and EELRKQEEKQ. Residues 75-292 are disordered; the sequence is RKVESDKTAE…GAYNPDTGEI (218 aa). Cystine bridges form between C296–C298, C307–C340, and C317–C330. The region spanning 304 to 348 is the CHCH domain; the sequence is HGPCGEEFKSAFSCFVYSEAEPKGIDCVEKFQHMQDCFRKYPEHY. 2 short sequence motifs (cx9C motif) span residues 307–317 and 330–340; these read CGEEFKSAFSC and CVEKFQHMQDC. The tract at residues 351–403 is disordered; sequence QLKETSDDEEPQDKVKVNTIESAPNVSSAKENAAKKAEQSDVKKEPLNEESKP. Residues 369-378 show a composition bias toward polar residues; the sequence is TIESAPNVSS. Over residues 382 to 403 the composition is skewed to basic and acidic residues; it reads NAAKKAEQSDVKKEPLNEESKP.

In terms of assembly, monomer. Interacts with the FAD-linked sulfhydryl oxidase ERV1 and with the substrate proteins COX17, TIM9, and TIM13, forming transient intermolecular disulfide bridges. Interacts with FCJ1. Requires Cu(2+) as cofactor. It depends on Zn(2+) as a cofactor.

It localises to the mitochondrion inner membrane. Required for the import and folding of small cysteine-containing proteins (small Tim) in the mitochondrial intermembrane space (IMS). Forms a redox cycle with ERV1 that involves a disulfide relay system. Precursor proteins to be imported into the IMS are translocated in their reduced form into the mitochondria. The oxidized form of MIA40 forms a transient intermolecular disulfide bridge with the reduced precursor protein, resulting in oxidation of the precursor protein that now contains an intramolecular disulfide bond and is able to undergo folding in the IMS. Reduced MIA40 is reoxidized by FAD-linked sulfhydryl oxidase ERV1. The protein is Mitochondrial intermembrane space import and assembly protein 40 (MIA40) of Saccharomyces cerevisiae (strain ATCC 204508 / S288c) (Baker's yeast).